The chain runs to 490 residues: Dual specificity protein kinase CLK3 (490 aa).

The residue at position 7 (tyrosine 7) is a Phosphotyrosine. Residues serine 9, serine 49, serine 51, serine 67, serine 76, and serine 78 each carry the phosphoserine modification. The segment at 22-138 is disordered; it reads RRRSYSREHE…SKRSSRSVED (117 aa). 2 stretches are compositionally biased toward basic and acidic residues: residues 26–56 and 63–76; these read YSRE…DRLP and EHRD…EDRS. The segment covering 103-116 has biased composition (basic residues); the sequence is TRKHAHHCHKRRTR. Low complexity predominate over residues 117 to 130; sequence SCSSASSRSQQSSK. Serine 135 bears the Phosphoserine mark. The Protein kinase domain occupies 156-472; it reads YEIVGNLGEG…LAEALLHPFF (317 aa). ATP contacts are provided by residues 162–170 and lysine 186; that span reads LGEGTFGKV. Residue aspartate 283 is the Proton acceptor of the active site.

The protein belongs to the protein kinase superfamily. CMGC Ser/Thr protein kinase family. Lammer subfamily. In terms of processing, autophosphorylates on all three types of residues.

It is found in the nucleus. Its subcellular location is the cytoplasm. The protein resides in the cytoplasmic vesicle. The protein localises to the secretory vesicle. It localises to the acrosome. It carries out the reaction L-seryl-[protein] + ATP = O-phospho-L-seryl-[protein] + ADP + H(+). It catalyses the reaction L-threonyl-[protein] + ATP = O-phospho-L-threonyl-[protein] + ADP + H(+). The enzyme catalyses L-tyrosyl-[protein] + ATP = O-phospho-L-tyrosyl-[protein] + ADP + H(+). Its activity is regulated as follows. Leucettine L41 inhibits its kinase activity and affects the regulation of alternative splicing mediated by phosphorylation of SR proteins. Functionally, dual specificity kinase acting on both serine/threonine and tyrosine-containing substrates. Phosphorylates serine- and arginine-rich (SR) proteins of the spliceosomal complex. May be a constituent of a network of regulatory mechanisms that enable SR proteins to control RNA splicing and can cause redistribution of SR proteins from speckles to a diffuse nucleoplasmic distribution. Phosphorylates SRSF1 and SRSF3. Regulates the alternative splicing of tissue factor (F3) pre-mRNA in endothelial cells. This is Dual specificity protein kinase CLK3 (CLK3) from Bos taurus (Bovine).